The chain runs to 166 residues: uncharacterized protein (166 aa).

4 helical membrane-spanning segments follow: residues 7–27 (VLFKISFLLIILVSLILSLFY), 30–50 (FLFAFLLSFILFGITWAYCYI), 69–89 (IETLRFLFILMIISVFIKSLL), and 92–112 (NSFFPYISFLLSNLILGLVLF).

To M.jannaschii MJ0795.1 and MJ0785.1.

It localises to the cell membrane. This is an uncharacterized protein from Methanocaldococcus jannaschii (strain ATCC 43067 / DSM 2661 / JAL-1 / JCM 10045 / NBRC 100440) (Methanococcus jannaschii).